The chain runs to 547 residues: GMP synthase [glutamine-hydrolyzing] (547 aa).

The Glutamine amidotransferase type-1 domain maps to 12-210 (KILILDFGSQ…VLDIAGAKPD (199 aa)). The active-site Nucleophile is Cys89. Active-site residues include His184 and Glu186. Positions 211-403 (WIMRDHIEEA…LGLPAEMVYR (193 aa)) constitute a GMPS ATP-PPase domain. Position 238 to 244 (238 to 244 (SGGVDSS)) interacts with ATP.

As to quaternary structure, homodimer.

It catalyses the reaction XMP + L-glutamine + ATP + H2O = GMP + L-glutamate + AMP + diphosphate + 2 H(+). The protein operates within purine metabolism; GMP biosynthesis; GMP from XMP (L-Gln route): step 1/1. Functionally, catalyzes the synthesis of GMP from XMP. The protein is GMP synthase [glutamine-hydrolyzing] of Burkholderia pseudomallei (strain 1710b).